Here is a 336-residue protein sequence, read N- to C-terminus: Oxaloacetate decarboxylase (336 aa).

Residues 10 to 258 (PIVLDTTVRD…LAAVDLDRIF (249 aa)) enclose the Pyruvate carboxyltransferase domain. Mn(2+) is bound by residues D19, H197, and H199.

The protein belongs to the 4-hydroxy-2-oxovalerate aldolase family. As to quaternary structure, homodimer. It depends on a divalent metal cation as a cofactor.

The catalysed reaction is oxaloacetate + H(+) = pyruvate + CO2. With respect to regulation, activity is abolished upon incubation with Chelex and EDTA. In terms of biological role, exhibits oxaloacetate decarboxylase activity. Lacks any detectable aldolase activity with 4-hydroxy-2-oxopentanoate (HOPA), 4-hydroxy-2-oxohexanoate (HOHA) or other 4-hydroxy-2-oxoacids. The polypeptide is Oxaloacetate decarboxylase (Mycobacterium tuberculosis (strain ATCC 25618 / H37Rv)).